The primary structure comprises 445 residues: Probable multidrug resistance protein YpnP (445 aa).

12 helical membrane passes run 15 to 35, 49 to 69, 95 to 115, 136 to 156, 168 to 188, 194 to 214, 240 to 260, 277 to 297, 314 to 334, 355 to 375, 384 to 404, and 411 to 431; these read LVLF…FQFI, LGAA…ILGL, AFVV…FFLS, LQIQ…STVL, FIAF…SVFR, AAYS…FYVI, IPAG…MSVV, LDSI…SMAG, LGVI…WVFG, LKWI…NGIV, VLVL…ALFS, and GIGL…FLYY.

The protein belongs to the multi antimicrobial extrusion (MATE) (TC 2.A.66.1) family.

It is found in the cell membrane. In Bacillus subtilis (strain 168), this protein is Probable multidrug resistance protein YpnP (ypnP).